Here is a 236-residue protein sequence, read N- to C-terminus: uncharacterized protein (236 aa).

Residues 1 to 17 (MSVSSLLQPNTYNINSK) are compositionally biased toward polar residues. A disordered region spans residues 1–94 (MSVSSLLQPN…GVKGTTGGTI (94 aa)). A compositionally biased stretch (low complexity) spans 18–35 (SQSLSNTPSNPTSQTNTL). The 34-residue stretch at 58-91 (GPSGPKGDKGDPGSKGETGSQGIKGDPGVKGTTG) folds into the Collagen-like domain.

It belongs to the sputnik virus V6 family.

This is an uncharacterized protein from Sputnik virophage.